The primary structure comprises 359 residues: Phosphate acyltransferase (359 aa).

This sequence belongs to the PlsX family. In terms of assembly, homodimer. Probably interacts with PlsY.

It is found in the cytoplasm. It catalyses the reaction a fatty acyl-[ACP] + phosphate = an acyl phosphate + holo-[ACP]. It participates in lipid metabolism; phospholipid metabolism. Catalyzes the reversible formation of acyl-phosphate (acyl-PO(4)) from acyl-[acyl-carrier-protein] (acyl-ACP). This enzyme utilizes acyl-ACP as fatty acyl donor, but not acyl-CoA. The chain is Phosphate acyltransferase from Koribacter versatilis (strain Ellin345).